We begin with the raw amino-acid sequence, 287 residues long: MNQPVSASPVVSVGSVTFGQDRPLSIIAGPCQMESRAHALEVAGALKDIAARLNVGLVFKTSFDKANRTSASGARGIGLKQALPVFADIRSSLGLPVLTDVHEAAQCAEVAQVVDVLQIPAFLCRQTDLLLAAAATGKVVNVKKGQFLAPWDMGNVVAKITGGGNRNILVTERGASFGYNTLVSDMRALPILARTTGAPVIFDATHSVQQPGGKGASTGGEREFVPVLARAAVAVGVAGVFIETHPDPDHAPSDGPNMVPLREFEALVRRLMAFDALAKAADPACPE.

It belongs to the KdsA family.

It localises to the cytoplasm. The enzyme catalyses D-arabinose 5-phosphate + phosphoenolpyruvate + H2O = 3-deoxy-alpha-D-manno-2-octulosonate-8-phosphate + phosphate. It functions in the pathway carbohydrate biosynthesis; 3-deoxy-D-manno-octulosonate biosynthesis; 3-deoxy-D-manno-octulosonate from D-ribulose 5-phosphate: step 2/3. It participates in bacterial outer membrane biogenesis; lipopolysaccharide biosynthesis. This chain is 2-dehydro-3-deoxyphosphooctonate aldolase, found in Nitrobacter winogradskyi (strain ATCC 25391 / DSM 10237 / CIP 104748 / NCIMB 11846 / Nb-255).